A 663-amino-acid polypeptide reads, in one-letter code: GPI mannosyltransferase 3 (663 aa).

Over residues 1 to 11 the composition is skewed to basic residues; it reads MPMSARSRRSN. Residues 1 to 44 are disordered; sequence MPMSARSRRSNPRLPPSPSSSSSSDAVRASPHSSPPSRLRPPSA. The span at 19–42 shows a compositional bias: low complexity; that stretch reads SSSSSSDAVRASPHSSPPSRLRPP. The next 8 helical transmembrane spans lie at 47–67, 110–130, 137–157, 226–246, 269–289, 304–324, 335–355, and 367–387; these read DVSS…ALTV, PLIF…LGLT, LLIA…DFYT, VLAV…FPPL, YASQ…LVGL, GSIL…LSVI, LLPA…IPAL, and LTLI…TLFH. Residues 492–512 form a disordered region; the sequence is HIPRRPSYATPPSSQRQPTQL. Residues 501 to 511 show a composition bias toward polar residues; that stretch reads TPPSSQRQPTQ.

This sequence belongs to the glycosyltransferase 22 family. PIGB subfamily.

The protein localises to the endoplasmic reticulum membrane. The protein operates within glycolipid biosynthesis; glycosylphosphatidylinositol-anchor biosynthesis. In terms of biological role, mannosyltransferase involved in glycosylphosphatidylinositol-anchor biosynthesis. Transfers the third mannose to Man2-GlcN-acyl-PI during GPI precursor assembly. In Emericella nidulans (strain FGSC A4 / ATCC 38163 / CBS 112.46 / NRRL 194 / M139) (Aspergillus nidulans), this protein is GPI mannosyltransferase 3 (gpi10).